The sequence spans 238 residues: Ribonuclease PH (238 aa).

Residues Arg86 and 124 to 126 (GTR) each bind phosphate.

This sequence belongs to the RNase PH family. As to quaternary structure, homohexameric ring arranged as a trimer of dimers.

The catalysed reaction is tRNA(n+1) + phosphate = tRNA(n) + a ribonucleoside 5'-diphosphate. Its function is as follows. Phosphorolytic 3'-5' exoribonuclease that plays an important role in tRNA 3'-end maturation. Removes nucleotide residues following the 3'-CCA terminus of tRNAs; can also add nucleotides to the ends of RNA molecules by using nucleoside diphosphates as substrates, but this may not be physiologically important. Probably plays a role in initiation of 16S rRNA degradation (leading to ribosome degradation) during starvation. The polypeptide is Ribonuclease PH (Nitrosospira multiformis (strain ATCC 25196 / NCIMB 11849 / C 71)).